The sequence spans 160 residues: 3-hydroxyacyl-[acyl-carrier-protein] dehydratase FabZ (160 aa).

Residue histidine 58 is part of the active site.

This sequence belongs to the thioester dehydratase family. FabZ subfamily.

Its subcellular location is the cytoplasm. The enzyme catalyses a (3R)-hydroxyacyl-[ACP] = a (2E)-enoyl-[ACP] + H2O. In terms of biological role, involved in unsaturated fatty acids biosynthesis. Catalyzes the dehydration of short chain beta-hydroxyacyl-ACPs and long chain saturated and unsaturated beta-hydroxyacyl-ACPs. This Ruegeria sp. (strain TM1040) (Silicibacter sp.) protein is 3-hydroxyacyl-[acyl-carrier-protein] dehydratase FabZ.